The primary structure comprises 518 residues: Glutamate--cysteine ligase (518 aa).

The protein belongs to the glutamate--cysteine ligase type 1 family. Type 1 subfamily.

It catalyses the reaction L-cysteine + L-glutamate + ATP = gamma-L-glutamyl-L-cysteine + ADP + phosphate + H(+). It participates in sulfur metabolism; glutathione biosynthesis; glutathione from L-cysteine and L-glutamate: step 1/2. The polypeptide is Glutamate--cysteine ligase (Shigella boydii serotype 18 (strain CDC 3083-94 / BS512)).